A 204-amino-acid chain; its full sequence is Dof zinc finger protein DOF3.1 (204 aa).

Positions 1–25 (MQDPAAYYQTMMAKQQQQQQPQFAE) are disordered. The segment at 29–83 (LKCPRCDSPNTKFCYYNNYNLSQPRHFCKSCRRYWTKGGALRNVPVGGGSRKNAT) adopts a Dof-type zinc-finger fold. The Zn(2+) site is built by Cys31, Cys34, Cys56, and Cys59. Disordered regions lie at residues 70–128 (RNVP…TRML) and 182–204 (RTEPGNNNNNPWTDLAMNRAEKN). A compositionally biased stretch (low complexity) spans 84–102 (KRSTSSSSSASSPSNSSQN). Residues 106-124 (KNPDPDPDPRNSQKPDLDP) show a composition bias toward basic and acidic residues.

Its subcellular location is the nucleus. In terms of biological role, transcription factor that binds specifically to a 5'-AA[AG]G-3' consensus core sequence. This Arabidopsis thaliana (Mouse-ear cress) protein is Dof zinc finger protein DOF3.1 (DOF3.1).